The following is a 269-amino-acid chain: Triosephosphate isomerase (269 aa).

8 to 10 (NWK) is a substrate binding site. Catalysis depends on histidine 105, which acts as the Electrophile. The active-site Proton acceptor is the glutamate 183. Substrate contacts are provided by residues glycine 189, serine 227, and 248 to 249 (GG).

The protein belongs to the triosephosphate isomerase family. In terms of assembly, homodimer.

The protein localises to the cytoplasm. It carries out the reaction D-glyceraldehyde 3-phosphate = dihydroxyacetone phosphate. It functions in the pathway carbohydrate biosynthesis; gluconeogenesis. The protein operates within carbohydrate degradation; glycolysis; D-glyceraldehyde 3-phosphate from glycerone phosphate: step 1/1. Functionally, involved in the gluconeogenesis. Catalyzes stereospecifically the conversion of dihydroxyacetone phosphate (DHAP) to D-glyceraldehyde-3-phosphate (G3P). This chain is Triosephosphate isomerase, found in Psychrobacter arcticus (strain DSM 17307 / VKM B-2377 / 273-4).